A 445-amino-acid polypeptide reads, in one-letter code: 2-oxoisovalerate dehydrogenase subunit alpha, mitochondrial (445 aa).

The transit peptide at 1–45 (MAVAIAAARVWRLNRGLSQAALLLLRRPGARGLARSHPRRQQQQF) directs the protein to the mitochondrion. Positions 33-54 (LARSHPRRQQQQFSSLDDKPQF) are disordered. Residues Tyr158 and Arg159 each contribute to the thiamine diphosphate site. Residue Ser206 participates in K(+) binding. Ser207 is a binding site for thiamine diphosphate. Positions 208, 211, and 212 each coordinate K(+). A Mg(2+)-binding site is contributed by Glu238. Gly239, Ala240, and Arg265 together coordinate thiamine diphosphate. 2 residues coordinate Mg(2+): Asn267 and Tyr269. A thiamine diphosphate-binding site is contributed by His336. Ser337 is subject to Phosphoserine; by BCKDK. Thr338 carries the phosphothreonine modification. A phosphoserine mark is found at Ser339 and Ser347. Lys356 is modified (N6-acetyllysine; alternate). The residue at position 356 (Lys356) is an N6-succinyllysine; alternate. Position 380 is an N6-succinyllysine (Lys380).

Belongs to the BCKDHA family. As to quaternary structure, heterotetramer of 2 alpha/BCKDHA and 2 beta chains/BCKDHB that forms the branched-chain alpha-keto acid decarboxylase (E1) component of the BCKD complex. The branched-chain alpha-ketoacid dehydrogenase is a large complex composed of three major building blocks E1, E2 and E3. It is organized around E2, a 24-meric cubic core composed of DBT, to which are associated 6 to 12 copies of E1, and approximately 6 copies of the dehydrogenase E3, a DLD dimer. Interacts with PPM1K. It depends on thiamine diphosphate as a cofactor. Requires Mg(2+) as cofactor. Phosphorylated at Ser-337 by BCKDK and dephosphorylated by protein phosphatase PPM1K.

It localises to the mitochondrion matrix. It catalyses the reaction N(6)-[(R)-lipoyl]-L-lysyl-[protein] + 3-methyl-2-oxobutanoate + H(+) = N(6)-[(R)-S(8)-2-methylpropanoyldihydrolipoyl]-L-lysyl-[protein] + CO2. Functionally, together with BCKDHB forms the heterotetrameric E1 subunit of the mitochondrial branched-chain alpha-ketoacid dehydrogenase (BCKD) complex. The BCKD complex catalyzes the multi-step oxidative decarboxylation of alpha-ketoacids derived from the branched-chain amino-acids valine, leucine and isoleucine producing CO2 and acyl-CoA which is subsequently utilized to produce energy. The E1 subunit catalyzes the first step with the decarboxylation of the alpha-ketoacid forming an enzyme-product intermediate. A reductive acylation mediated by the lipoylamide cofactor of E2 extracts the acyl group from the E1 active site for the next step of the reaction. This chain is 2-oxoisovalerate dehydrogenase subunit alpha, mitochondrial (BCKDHA), found in Pan troglodytes (Chimpanzee).